A 353-amino-acid polypeptide reads, in one-letter code: Dimethylsulfoniopropionate lyase 2 (353 aa).

Residues C125 and C274 each act as proton donor/acceptor in the active site. The tract at residues 326 to 353 (DPNETDVSKGRPTKAEHRFGPEFEEMLQ) is disordered. Over residues 331–346 (DVSKGRPTKAEHRFGP) the composition is skewed to basic and acidic residues.

The protein belongs to the aspartate/glutamate racemases family. ALMA1 subfamily. In terms of assembly, homotetramer.

It catalyses the reaction S,S-dimethyl-beta-propiothetin = acrylate + dimethyl sulfide + H(+). Mediates cleavage of dimethylsulfoniopropionate (DMSP) into dimethyl sulfide (DMS) and acrylate. DMS is the principal form by which sulfur is transported from oceans to the atmosphere and is a key component of the ocean sulfur cycle. The polypeptide is Dimethylsulfoniopropionate lyase 2 (Emiliania huxleyi (strain CCMP1516)).